A 336-amino-acid polypeptide reads, in one-letter code: uncharacterized protein (336 aa).

Positions 1 to 23 (MKTRHLVYLAFALLGLGLAGLLE) are cleaved as a signal peptide. Transmembrane regions (helical) follow at residues 34 to 54 (LLSL…LLLG), 75 to 95 (VVVA…LLTT), and 106 to 126 (VHSL…ALGY). A PINc domain is found at 144-255 (VLDTSVLVDG…MARIYGVKAL (112 aa)). Mg(2+) is bound at residue aspartate 222. Residues 267 to 328 (QLQVGDTLKL…IQTQVGRLFF (62 aa)) form the TRAM domain.

Belongs to the PINc/VapC protein family. Mg(2+) serves as cofactor.

The protein resides in the membrane. Part of a toxin-antitoxin (TA) system. An RNase. This is an uncharacterized protein from Thermus thermophilus (strain ATCC 27634 / DSM 579 / HB8).